The sequence spans 224 residues: UPF0758 protein VF_0126 (224 aa).

The region spanning 102 to 224 (ALTSPEHTKR…IVSFAERGWI (123 aa)) is the MPN domain. Zn(2+) contacts are provided by His-173, His-175, and Asp-186. The short motif at 173 to 186 (HNHPSGVAEPSQAD) is the JAMM motif element.

It belongs to the UPF0758 family.

The protein is UPF0758 protein VF_0126 of Aliivibrio fischeri (strain ATCC 700601 / ES114) (Vibrio fischeri).